Here is a 200-residue protein sequence, read N- to C-terminus: Pyrrolidone-carboxylate peptidase (200 aa).

Active-site residues include Glu78, Cys141, and His165.

This sequence belongs to the peptidase C15 family. Homotetramer.

The protein localises to the cytoplasm. It catalyses the reaction Release of an N-terminal pyroglutamyl group from a polypeptide, the second amino acid generally not being Pro.. Removes 5-oxoproline from various penultimate amino acid residues except L-proline. This chain is Pyrrolidone-carboxylate peptidase, found in Thermococcus onnurineus (strain NA1).